A 493-amino-acid polypeptide reads, in one-letter code: Solute carrier family 2, facilitated glucose transporter member 3 (493 aa).

The Cytoplasmic portion of the chain corresponds to 1-10 (MGTTKVTPSL). The helical transmembrane segment at 11–32 (VFAVTVATIGSFQFGYNTGVIN) threads the bilayer. Residues 33 to 64 (APETILKDFLNYTLEERLEDLPSEGLLTALWS) lie on the Extracellular side of the membrane. A glycan (N-linked (GlcNAc...) asparagine) is linked at N43. A helical transmembrane segment spans residues 65–85 (LCVAIFSVGGMIGSFSVGLFV). The Cytoplasmic portion of the chain corresponds to 86–90 (NRFGR). A helical transmembrane segment spans residues 91–111 (RNSMLLVNLLAIIAGCLMGFA). Topologically, residues 112 to 118 (KIAESVE) are extracellular. The helical transmembrane segment at 119-142 (MLILGRLLIGIFCGLCTGFVPMYI) threads the bilayer. Over 143–153 (GEVSPTALRGA) the chain is Cytoplasmic. Residues 154-174 (FGTLNQLGIVVGILVAQIFGL) traverse the membrane as a helical segment. Position 159 (Q159) interacts with D-glucose. Topologically, residues 175 to 183 (DFILGSEEL) are extracellular. A helical membrane pass occupies residues 184–204 (WPGLLGLTIIPAILQSAALPF). Residues 205–269 (CPESPRFLLI…LFRSPNYVQP (65 aa)) are Cytoplasmic-facing. T232 carries the phosphothreonine modification. The helical transmembrane segment at 270–290 (LLISIVLQLSQQLSGINAVFY) threads the bilayer. An important for selectivity against fructose region spans residues 277–279 (QLS). D-glucose is bound by residues 280-281 (QQ) and N286. Topologically, residues 291-304 (YSTGIFKDAGVQEP) are extracellular. Residues 305 to 325 (IYATIGAGVVNTIFTVVSLFL) traverse the membrane as a helical segment. N315 provides a ligand contact to D-glucose. The Cytoplasmic segment spans residues 326 to 331 (VERAGR). A helical membrane pass occupies residues 332 to 352 (RTLHMIGLGGMAVCSVFMTIS). Topologically, residues 353 to 363 (LLLKDDYEAMS) are extracellular. Residues 364–389 (FVCIVAILIYVAFFEIGPGPIPWFIV) form a helical membrane-spanning segment. 2 residues coordinate D-glucose: E378 and W386. The Cytoplasmic segment spans residues 390–399 (AELFSQGPRP). Residues 400 to 420 (AAIAVAGCCNWTSNFLVGMLF) traverse the membrane as a helical segment. The Extracellular portion of the chain corresponds to 421–429 (PSAAAYLGA). Residues 430 to 450 (YVFIIFAAFLIFFLIFTFFKV) form a helical membrane-spanning segment. The Cytoplasmic portion of the chain corresponds to 451–493 (PETKGRTFEDIARAFEGQAHSGKGPAGVELNSMQPVKETPGNA). Residues 469-493 (AHSGKGPAGVELNSMQPVKETPGNA) form a disordered region. S471 and S482 each carry phosphoserine. T489 carries the post-translational modification Phosphothreonine.

It belongs to the major facilitator superfamily. Sugar transporter (TC 2.A.1.1) family. Glucose transporter subfamily. Interacts with SMIM43; the interaction may promote SLC2A3-mediated glucose transport to meet the energy needs of mesendoderm differentiation. As to expression, expressed in spermatozoa (at protein level). Detected in brain (at protein level). Abundantly expressed in the hippocampus, cerebellum and cerebral cortex with lower expression in the dentate gyrus and piriform cortex.

The protein resides in the cell membrane. The protein localises to the perikaryon. It localises to the cell projection. It carries out the reaction D-glucose(out) = D-glucose(in). The enzyme catalyses D-galactose(in) = D-galactose(out). Deoxyglucose transport is inhibited by D-glucose, D-galactose and maltose. Galactose transport is inhibited by D-glucose and maltose. In terms of biological role, facilitative glucose transporter. Can also mediate the uptake of various other monosaccharides across the cell membrane. Mediates the uptake of glucose, 2-deoxyglucose, galactose, mannose, xylose and fucose, and probably also dehydroascorbate. Does not mediate fructose transport. Required for mesendoderm differentiation. The chain is Solute carrier family 2, facilitated glucose transporter member 3 from Mus musculus (Mouse).